The chain runs to 265 residues: 3-methyl-2-oxobutanoate hydroxymethyltransferase (265 aa).

D46 and D85 together coordinate Mg(2+). 3-methyl-2-oxobutanoate contacts are provided by residues 46 to 47 (DS), D85, and K114. A Mg(2+)-binding site is contributed by E116. E183 functions as the Proton acceptor in the catalytic mechanism.

Belongs to the PanB family. Homodecamer; pentamer of dimers. The cofactor is Mg(2+).

Its subcellular location is the cytoplasm. It carries out the reaction 3-methyl-2-oxobutanoate + (6R)-5,10-methylene-5,6,7,8-tetrahydrofolate + H2O = 2-dehydropantoate + (6S)-5,6,7,8-tetrahydrofolate. It functions in the pathway cofactor biosynthesis; coenzyme A biosynthesis. In terms of biological role, catalyzes the reversible reaction in which hydroxymethyl group from 5,10-methylenetetrahydrofolate is transferred onto alpha-ketoisovalerate to form ketopantoate. This Caldivirga maquilingensis (strain ATCC 700844 / DSM 13496 / JCM 10307 / IC-167) protein is 3-methyl-2-oxobutanoate hydroxymethyltransferase.